An 87-amino-acid chain; its full sequence is MDQLNAKEQQEFQKLVEQKQMKDFMRLYSGLVERCFTDCVNDFTSSKLTSKEESCILKCSEKFLKHSERVGQRFQEQNAALGQGLGR.

Residues 35–59 (CFTDCVNDFTSSKLTSKEESCILKC) carry the Twin CX3C motif motif. 2 disulfides stabilise this stretch: Cys-35/Cys-59 and Cys-39/Cys-55.

The protein belongs to the small Tim family. In terms of assembly, heterohexamer; composed of 3 copies of TIM9 and 3 copies of TIM10, named soluble 70 kDa complex. Associates with the TIM22 complex, whose core is composed of TIM22 and TIM54. Interacts with the transmembrane regions of multi-pass transmembrane proteins in transit.

The protein localises to the mitochondrion inner membrane. Functionally, mitochondrial intermembrane chaperone that participates in the import and insertion of multi-pass transmembrane proteins into the mitochondrial inner membrane. Also required for the transfer of beta-barrel precursors from the TOM complex to the sorting and assembly machinery (SAM complex) of the outer membrane. Acts as a chaperone-like protein that protects the hydrophobic precursors from aggregation and guide them through the mitochondrial intermembrane space. The protein is Mitochondrial import inner membrane translocase subunit TIM9 (TIM9) of Candida glabrata (strain ATCC 2001 / BCRC 20586 / JCM 3761 / NBRC 0622 / NRRL Y-65 / CBS 138) (Yeast).